Reading from the N-terminus, the 161-residue chain is Endoribonuclease YbeY (161 aa).

3 residues coordinate Zn(2+): His121, His125, and His131.

Belongs to the endoribonuclease YbeY family. The cofactor is Zn(2+).

Its subcellular location is the cytoplasm. Its function is as follows. Single strand-specific metallo-endoribonuclease involved in late-stage 70S ribosome quality control and in maturation of the 3' terminus of the 16S rRNA. The polypeptide is Endoribonuclease YbeY (Xanthomonas axonopodis pv. citri (strain 306)).